Here is a 216-residue protein sequence, read N- to C-terminus: MMRPEEIYQRIEAKNWRHVWVVGDIHGCFSMLMKRLRECRFDPQQDLLVSVGDLIDRGPDSLGCLALLRESWMTAVRGNHEQMALDARASSQSTLWLMNGGDWFTRLTAEHAAQAEALFILCQRLPWILEVRCRHSTHVIAHADYPASTYQWQKKVDLHQVLWSRERLINKRGGISGADHFWFGHTPLRRRMDFANVHYIDTGAVFGGQLTLARIQ.

4 residues coordinate Mn(2+): Asp24, His26, Asp53, and Asn79. His80 functions as the Proton donor in the catalytic mechanism. His185 contributes to the Mn(2+) binding site.

It belongs to the PPP phosphatase family. PP-1 subfamily. Mn(2+) is required as a cofactor.

The enzyme catalyses O-phospho-L-seryl-[protein] + H2O = L-seryl-[protein] + phosphate. It catalyses the reaction O-phospho-L-threonyl-[protein] + H2O = L-threonyl-[protein] + phosphate. With respect to regulation, inhibited by cadmium, copper, zinc when added cobalt when added concomitantly with manganese. In terms of biological role, can hydrolyze phosphorylated Ser-, Thr- or Tyr-substrates in vitro. The natural substrate is unknown. The protein is Serine/threonine-protein phosphatase 1 (pphA) of Salmonella typhimurium (strain LT2 / SGSC1412 / ATCC 700720).